A 114-amino-acid polypeptide reads, in one-letter code: Large ribosomal subunit protein uL24 (114 aa).

This sequence belongs to the universal ribosomal protein uL24 family. In terms of assembly, part of the 50S ribosomal subunit.

In terms of biological role, one of two assembly initiator proteins, it binds directly to the 5'-end of the 23S rRNA, where it nucleates assembly of the 50S subunit. Functionally, one of the proteins that surrounds the polypeptide exit tunnel on the outside of the subunit. The polypeptide is Large ribosomal subunit protein uL24 (Acidothermus cellulolyticus (strain ATCC 43068 / DSM 8971 / 11B)).